The sequence spans 351 residues: Putative phospho-N-acetylmuramoyl-pentapeptide-transferase (351 aa).

Helical transmembrane passes span 2–22 (MEFL…TLFI), 44–64 (AGTP…VTVL), 71–91 (LVLT…DDLL), 158–178 (GEKI…GAVG), 181–201 (GGFY…VGAI), 212–232 (GMAA…LGLS), 235–255 (ALPF…NRHP), 258–278 (IFMG…AVML), 281–301 (TVYF…VSLL), and 328–348 (IVLL…YMTG).

This sequence belongs to the glycosyltransferase 4 family. MraY subfamily. Mg(2+) is required as a cofactor.

It localises to the cell membrane. The enzyme catalyses UDP-N-acetyl-alpha-D-muramoyl-L-alanyl-gamma-D-glutamyl-meso-2,6-diaminopimeloyl-D-alanyl-D-alanine + di-trans,octa-cis-undecaprenyl phosphate = di-trans,octa-cis-undecaprenyl diphospho-N-acetyl-alpha-D-muramoyl-L-alanyl-D-glutamyl-meso-2,6-diaminopimeloyl-D-alanyl-D-alanine + UMP. This chain is Putative phospho-N-acetylmuramoyl-pentapeptide-transferase, found in Methanothermobacter thermautotrophicus (strain ATCC 29096 / DSM 1053 / JCM 10044 / NBRC 100330 / Delta H) (Methanobacterium thermoautotrophicum).